Consider the following 619-residue polypeptide: Histone H3.v1 (619 aa).

Residues 1-15 (MANKPKPSEHLRDLI) show a composition bias toward basic and acidic residues. 2 disordered regions span residues 1–99 (MANK…GSSR) and 190–526 (ILPS…RKKR). Low complexity-rich tracts occupy residues 28 to 50 (QLKQ…LTQS) and 66 to 99 (STSE…GSSR). A compositionally biased stretch (acidic residues) spans 230–287 (DQEEEEEEEEEEEEEEEEEEEEEEEEEEEEEEEEEEEEEEEEEEEEEEEEEEEEEEEV). Low complexity-rich tracts occupy residues 296–306 (GKPLPSPSLSS) and 314–325 (SSSVASSESSKQ). Positions 326–344 (SRVKVSKKPSPLIKKKPAP) are enriched in basic residues. Composition is skewed to low complexity over residues 345 to 360 (IKKV…QQQS), 385 to 408 (KNVL…LTPT), and 415 to 521 (IVTT…TPTT).

Belongs to the histone H3 family.

The protein is Histone H3.v1 (H3v1) of Dictyostelium discoideum (Social amoeba).